The chain runs to 465 residues: Ribulose bisphosphate carboxylase large chain (465 aa).

Residue Lys-4 is modified to N6,N6,N6-trimethyllysine. Substrate-binding residues include Asn-113 and Thr-163. Lys-165 acts as the Proton acceptor in catalysis. Residue Lys-167 coordinates substrate. Mg(2+) contacts are provided by Lys-191, Asp-193, and Glu-194. Lys-191 is subject to N6-carboxylysine. Residue His-284 is the Proton acceptor of the active site. Positions 285, 317, and 369 each coordinate substrate.

It belongs to the RuBisCO large chain family. Type I subfamily. In terms of assembly, heterohexadecamer of 8 large chains and 8 small chains; disulfide-linked. The disulfide link is formed within the large subunit homodimers. Requires Mg(2+) as cofactor. The disulfide bond which can form in the large chain dimeric partners within the hexadecamer appears to be associated with oxidative stress and protein turnover.

The protein localises to the plastid. The protein resides in the chloroplast. It carries out the reaction 2 (2R)-3-phosphoglycerate + 2 H(+) = D-ribulose 1,5-bisphosphate + CO2 + H2O. It catalyses the reaction D-ribulose 1,5-bisphosphate + O2 = 2-phosphoglycolate + (2R)-3-phosphoglycerate + 2 H(+). Functionally, ruBisCO catalyzes two reactions: the carboxylation of D-ribulose 1,5-bisphosphate, the primary event in carbon dioxide fixation, as well as the oxidative fragmentation of the pentose substrate in the photorespiration process. Both reactions occur simultaneously and in competition at the same active site. The chain is Ribulose bisphosphate carboxylase large chain from Combretum indicum (Rangoon creeper).